The primary structure comprises 196 residues: uncharacterized protein (196 aa).

Residues S122–T135 are compositionally biased toward basic and acidic residues. Residues S122–R150 form a disordered region.

This is an uncharacterized protein from Leptospira interrogans.